We begin with the raw amino-acid sequence, 804 residues long: Protein-lysine N-methyltransferase SMYD4 (804 aa).

Arg-112–Ala-114 provides a ligand contact to S-adenosyl-L-methionine. Positions Ser-233–Gly-574 constitute an SET domain. Zn(2+) contacts are provided by Cys-296, Cys-299, Cys-309, Cys-312, Cys-318, Cys-322, His-331, and Cys-335. The segment at Cys-296–Cys-335 adopts an MYND-type zinc-finger fold. Residues Asn-427, Asn-539 to His-540, Tyr-573, and Phe-595 each bind S-adenosyl-L-methionine.

It belongs to the class V-like SAM-binding methyltransferase superfamily. Interacts (via MYND-type zinc finger) with HDAC1.

Its subcellular location is the nucleus. It localises to the cytoplasm. It carries out the reaction L-lysyl-[protein] + S-adenosyl-L-methionine = N(6)-methyl-L-lysyl-[protein] + S-adenosyl-L-homocysteine + H(+). Its function is as follows. Protein-lysine N-methyltransferase. Monomethylates PRMT5, modulating its transcriptional activity. May also act as a histone methyltransferase. Plays a critical role in cardiac development. Acts as a key epigenetic regulator of gene expression during cardiac development via its dual activities as a methyltransferase and negative regulator of HDAC1. The polypeptide is Protein-lysine N-methyltransferase SMYD4 (Homo sapiens (Human)).